A 493-amino-acid polypeptide reads, in one-letter code: MTDLIRSDAATLAAKIAAKEVSATELTQACLDQIEATDDRYHAFLHIGAHEALSAAAAVDTALAAGERLPSALAGVPLALKDVFTTVDMPTTCGSKILEGWRSPYDATLTLRLRAAGIPILGKTNMDEFAMGSSTENSAYGPTRNPWNLDRVPGGSGGGSAAALAAYQAPLAIGSDTGGSIRQPAALTATVGVKPTYGTVSRYGLVACASSLDQGGPCARTVLDTAMLHQVIAGHDAKDSTSLETEIPDVVGAAKAGASGDLRGVRIGVVKQLRGDGYQPGVLASFEAAVAQLTALGAEVSEVDCPHFDHALAAYYLILPSEVSSNLARFDAMRYGLRIGDDGTHSAEEVMAMTRAAGFGPEVKRRIMIGAYALSAGYYDAYYNQAQKIRTLIARDLDEAYQSVDVLVSPATPTTAFPLGEKVDDPLAMYLFDLCTLPLNLAGHCGMSVPSGLSPDDGLPVGLQIMAPALADDRLYRVGAAYEAARGPLPSAI.

Catalysis depends on charge relay system residues Lys-81 and Ser-156. Ser-180 (acyl-ester intermediate) is an active-site residue.

Belongs to the amidase family. GatA subfamily. Heterotrimer of A, B and C subunits.

The enzyme catalyses L-glutamyl-tRNA(Gln) + L-glutamine + ATP + H2O = L-glutaminyl-tRNA(Gln) + L-glutamate + ADP + phosphate + H(+). In terms of biological role, allows the formation of correctly charged Gln-tRNA(Gln) through the transamidation of misacylated Glu-tRNA(Gln) in organisms which lack glutaminyl-tRNA synthetase. The reaction takes place in the presence of glutamine and ATP through an activated gamma-phospho-Glu-tRNA(Gln). The protein is Glutamyl-tRNA(Gln) amidotransferase subunit A of Mycobacterium ulcerans (strain Agy99).